The following is a 150-amino-acid chain: HTH-type transcriptional regulator LrpA (150 aa).

In terms of domain architecture, HTH asnC-type spans 5–66 (LDDIDRILVR…RINPEAVGHL (62 aa)). The segment at residues 24 to 43 (LSELATRAGLSVSAVQSRVR) is a DNA-binding region (H-T-H motif). Val-100, Gly-102, and Glu-104 together coordinate L-phenylalanine.

Homohexadecamer in the absence of any added ligand. Homooctamer. Tetramer of dimers. In the presence of phenylalanine, the hexadecamer dissociates into an octamer, which further dissociates partially into lower-order oligomers.

With respect to regulation, the DNA-binding activity of LrpA is modulated by interaction of LrpA with various effector molecules, including amino acids and vitamins. The DNA binding affinity is decreased by several amino acids, including phenylalanine, tyrosine, tryptophan, histidine, leucine and aspartate. Preferentially binds to aromatic amino acids. Besides amino acids, the binding affinity is also reduced by vitamins, including B1, B3, B6, VC, B7, B9, B12, VA and VK3. Transcriptional regulator that probably plays an important role in M.tuberculosis persistence. Regulates the expression of several genes, including lat, rsmG, whiB2, lsr2 and Rv2011c. Acts by binding directly to the promoter region of the target genes. This is HTH-type transcriptional regulator LrpA from Mycobacterium tuberculosis (strain ATCC 25618 / H37Rv).